Consider the following 585-residue polypeptide: Arginine--tRNA ligase (585 aa).

A 'HIGH' region motif is present at residues 126–136 (PNIAKEMHVGH).

The protein belongs to the class-I aminoacyl-tRNA synthetase family. Monomer.

Its subcellular location is the cytoplasm. It carries out the reaction tRNA(Arg) + L-arginine + ATP = L-arginyl-tRNA(Arg) + AMP + diphosphate. This chain is Arginine--tRNA ligase, found in Rippkaea orientalis (strain PCC 8801 / RF-1) (Cyanothece sp. (strain PCC 8801)).